The sequence spans 503 residues: uncharacterized protein (503 aa).

Residues 26 to 46 form a helical membrane-spanning segment; sequence ILFLLLGLIILVNISINVATA. Disordered regions lie at residues 155–176, 311–381, 436–456, and 472–503; these read RPLSRGYPPFRKQPQGHKMSQM, YDAR…ESHE, QISDPTPPPTTFVPLSRNPGG, and VQENRGRASSLPPPSTSASRPSLHRSRTGKLN. 2 stretches are compositionally biased toward basic and acidic residues: residues 311–322 and 334–346; these read YDARDQWRRGTE and NPREVQGYRDHNS. Over residues 348 to 367 the composition is skewed to polar residues; that stretch reads AHRQNFSSHTHSQPNHSPPQ. The segment covering 493-503 has biased composition (basic residues); that stretch reads SLHRSRTGKLN.

The protein resides in the membrane. This is an uncharacterized protein from Mus musculus (Mouse).